Here is a 74-residue protein sequence, read N- to C-terminus: Protein A30 homolog (74 aa).

It belongs to the chordopoxvirinae A30 family. Interacts with protein G7; the interaction stabilizes both proteins. Phosphorylated by viral F10 kinase.

In terms of biological role, required for the association between the dense viroplasm and the viral membranes to form the mature virion (MV). This chain is Protein A30 homolog, found in Fowlpox virus (strain NVSL) (FPV).